The sequence spans 283 residues: 5'-nucleotidase SurE (283 aa).

Aspartate 14, aspartate 15, serine 47, and asparagine 105 together coordinate a divalent metal cation.

Belongs to the SurE nucleotidase family. A divalent metal cation is required as a cofactor.

Its subcellular location is the cytoplasm. The catalysed reaction is a ribonucleoside 5'-phosphate + H2O = a ribonucleoside + phosphate. In terms of biological role, nucleotidase that shows phosphatase activity on nucleoside 5'-monophosphates. The polypeptide is 5'-nucleotidase SurE (Chlamydia trachomatis serovar D (strain ATCC VR-885 / DSM 19411 / UW-3/Cx)).